The primary structure comprises 471 residues: Extracellular endo-alpha-(1-&gt;5)-L-arabinanase (471 aa).

Residues 1-19 (MRFLFLMITLTALTGYILA) form the signal peptide. Asp32 serves as the catalytic Proton acceptor. Residues Asp32, Gly117, 167–170 (NALD), 187–189 (SWF), and 219–223 (HSSME) contribute to the substrate site. Glu223 serves as the catalytic Proton donor. His314 serves as a coordination point for Ca(2+).

The protein belongs to the glycosyl hydrolase 43 family. In terms of assembly, monomer. The cofactor is Ca(2+).

Its subcellular location is the secreted. It catalyses the reaction Endohydrolysis of (1-&gt;5)-alpha-arabinofuranosidic linkages in (1-&gt;5)-arabinans.. Its pathway is glycan metabolism; L-arabinan degradation. In terms of biological role, involved in the degradation of arabinan and is a key enzyme in the complete degradation of the plant cell wall. Catalyzes the internal cleavage of alpha-(1-&gt;5)-L-arabinofuranosyl residues in different arabinan-containing polysaccharides, and releases arabinotriose and arabinobiose as end products. It acts on branched arabinan (from sugar beet), but more slowly when compared to linear or debranched arabinan. The sequence is that of Extracellular endo-alpha-(1-&gt;5)-L-arabinanase from Thermotoga petrophila (strain ATCC BAA-488 / DSM 13995 / JCM 10881 / RKU-1).